The primary structure comprises 276 residues: Undecaprenyl-diphosphatase (276 aa).

Helical transmembrane passes span 1–21 (MSWL…FLPV), 39–59 (AGAS…LVYF), 84–104 (YWLG…GLLF), 115–135 (LWLV…AEYA), 159–179 (LALV…LFLG), 190–210 (FLLA…DAFA), 222–242 (QLLV…AWFL), and 253–273 (FVGY…TGVV).

This sequence belongs to the UppP family.

The protein resides in the cell membrane. The enzyme catalyses di-trans,octa-cis-undecaprenyl diphosphate + H2O = di-trans,octa-cis-undecaprenyl phosphate + phosphate + H(+). In terms of biological role, catalyzes the dephosphorylation of undecaprenyl diphosphate (UPP). Confers resistance to bacitracin. This is Undecaprenyl-diphosphatase from Mycolicibacterium gilvum (strain PYR-GCK) (Mycobacterium gilvum (strain PYR-GCK)).